An 87-amino-acid chain; its full sequence is U14-lycotoxin-Ls1a (87 aa).

A signal peptide spans 1-20 (MNSKVFAVLLLLALLTCVLS). One can recognise a WAP domain in the interval 21–66 (EKYCPTPRNTSCKKMNIRNNCCRDSDCTSNAFCCAEPCGNFCHKAS). Disulfide bonds link Cys-24/Cys-54, Cys-32/Cys-58, Cys-41/Cys-53, Cys-42/Cys-80, and Cys-47/Cys-62.

It belongs to the venom protein 11 family. 01 (wap-1) subfamily. In terms of processing, contains 5 disulfide bonds. As to expression, expressed by the venom gland.

It is found in the secreted. Functionally, has antibacterial activity. This is U14-lycotoxin-Ls1a from Lycosa singoriensis (Wolf spider).